The following is a 138-amino-acid chain: Putative pre-16S rRNA nuclease (138 aa).

It belongs to the YqgF nuclease family.

It is found in the cytoplasm. Could be a nuclease involved in processing of the 5'-end of pre-16S rRNA. In Azobacteroides pseudotrichonymphae genomovar. CFP2, this protein is Putative pre-16S rRNA nuclease.